Consider the following 334-residue polypeptide: NAD-dependent protein deacetylase sirtuin-3 (334 aa).

The Deacetylase sirtuin-type domain occupies 53-315; sequence SSEKKFSLQD…ERLVDLLGWT (263 aa). Lys-57 bears the N6-succinyllysine mark. Residues 80–100 and 163–166 each bind NAD(+); these read GAGISTPSGIPDFRSPGSGLY and QNID. His-183 functions as the Proton acceptor in the catalytic mechanism. Residues Cys-191, Cys-194, Cys-215, and Cys-218 each coordinate Zn(2+). NAD(+) is bound by residues 254-256 and 279-281; these read GTS and NRD.

The protein belongs to the sirtuin family. Class I subfamily. As to quaternary structure, upon metabolic stress, forms a complex composed of FOXO3, SIRT3 and mitochondrial RNA polymerase POLRMT; the complex is recruited to mtDNA in a SIRT3-dependent manner. Also forms a complex composed of FOXO3, SIRT3, TFAM and POLRMT. Interacts with NDUFA9, ACSS1, IDH2 and GDH. Interacts with PCCA. The cofactor is Zn(2+). In terms of tissue distribution, expressed in cardiomyocytes (at protein level). Expressed in the brain, liver, kidney and testes. Expressed in skeletal muscles (at protein level).

Its subcellular location is the mitochondrion matrix. It localises to the cytoplasm. It catalyses the reaction N(6)-acetyl-L-lysyl-[protein] + NAD(+) + H2O = 2''-O-acetyl-ADP-D-ribose + nicotinamide + L-lysyl-[protein]. The catalysed reaction is N(6)-[(S)-lactoyl]-L-lysyl-[protein] + NAD(+) + H2O = 2''-O-(S)-lactoyl-ADP-D-ribose + nicotinamide + L-lysyl-[protein]. NAD-dependent protein deacetylase. Activates or deactivates mitochondrial target proteins by deacetylating key lysine residues. Known targets include ACSS1, IDH, GDH, PDHA1, SOD2, LCAD, SDHA, MRPL12 and the ATP synthase subunit ATP5PO. Contributes to the regulation of the cellular energy metabolism. Important for regulating tissue-specific ATP levels. In response to metabolic stress, deacetylates transcription factor FOXO3 and recruits FOXO3 and mitochondrial RNA polymerase POLRMT to mtDNA to promote mtDNA transcription. Acts as a regulator of ceramide metabolism by mediating deacetylation of ceramide synthases CERS1, CERS2 and CERS6, thereby increasing their activity and promoting mitochondrial ceramide accumulation. Regulates hepatic lipogenesis. Uses NAD(+) substrate imported by SLC25A47, triggering downstream activation of PRKAA1/AMPK-alpha signaling cascade that ultimately downregulates sterol regulatory element-binding protein (SREBP) transcriptional activities and ATP-consuming lipogenesis to restore cellular energy balance. In addition to protein deacetylase activity, also acts as a protein-lysine deacylase by mediating delactylation of proteins, such as CCNE2 and 'Lys-16' of histone H4 (H4K16la). The protein is NAD-dependent protein deacetylase sirtuin-3 of Mus musculus (Mouse).